The sequence spans 217 residues: NADPH-dependent 3-demethoxyubiquinone 3-hydroxylase, mitochondrial (217 aa).

Tandem repeats lie at residues 48 to 129 and 130 to 217. Residues 48 to 217 are 2 X approximate tandem repeats; that stretch reads AVDQIIRVDH…SAAIYLSERF (170 aa). Fe cation is bound by residues E60, E90, H93, E142, E178, and H181. Y212 and R216 together coordinate NADH.

This sequence belongs to the COQ7 family. Component of a multi-subunit COQ enzyme complex. Interacts with COQ8B and COQ6. Interacts with COQ9. Fe cation is required as a cofactor.

The protein resides in the mitochondrion inner membrane. The catalysed reaction is a 5-methoxy-2-methyl-3-(all-trans-polyprenyl)benzoquinone + NADH + O2 = a 3-demethylubiquinone + NAD(+) + H2O. It functions in the pathway cofactor biosynthesis; ubiquinone biosynthesis. Catalyzes the hydroxylation of the 5-methoxy-2-methyl-3-(all-trans-polyprenyl)benzoquinone at the C6 position and participates in the biosynthesis of ubiquinone. Catalyzes the reaction through a substrate-mediated reduction pathway, whereby NADH shuttles electrons to 5-methoxy-2-methyl-3-(all-trans-decaprenyl)benzoquinone, which then transfers the electrons to the two Fe(3+) centers. The binding of 5-methoxy-2-methyl-3-(all-trans-polyprenyl)benzoquinone (DMQn) mediates reduction of the diiron center by nicotinamide adenine dinucleotide (NADH) and initiates oxygen activation for subsequent DMQ hydroxylation. The physiological substrates are 5-methoxy-2-methyl-3-(all-trans-nonaprenyl)benzoquinone (DMQ(9)) and 5-methoxy-2-methyl-3-(all-trans-decaprenyl)benzoquinone (DMQ(10)), however in vitro the enzyme does not have any specificity concerning the length of the polyprenyl tail, and accepts tails of various lengths with similar efficiency. Also has a structural role in the COQ enzyme complex, stabilizing other COQ polypeptides. Involved in lifespan determination in a ubiquinone-independent manner. Plays a role in modulating mitochondrial stress responses, acting in the nucleus, perhaps via regulating gene expression, independent of its characterized mitochondrial function in ubiquinone biosynthesis. This is NADPH-dependent 3-demethoxyubiquinone 3-hydroxylase, mitochondrial from Rattus norvegicus (Rat).